The sequence spans 20 residues: Cytochrome c oxidase subunit 6A1, mitochondrial (20 aa).

Belongs to the cytochrome c oxidase subunit 6A family. In terms of assembly, component of the cytochrome c oxidase (complex IV, CIV), a multisubunit enzyme composed of 14 subunits. The complex is composed of a catalytic core of 3 subunits MT-CO1, MT-CO2 and MT-CO3, encoded in the mitochondrial DNA, and 11 supernumerary subunits COX4I, COX5A, COX5B, COX6A, COX6B, COX6C, COX7A, COX7B, COX7C, COX8 and NDUFA4, which are encoded in the nuclear genome. The complex exists as a monomer or a dimer and forms supercomplexes (SCs) in the inner mitochondrial membrane with NADH-ubiquinone oxidoreductase (complex I, CI) and ubiquinol-cytochrome c oxidoreductase (cytochrome b-c1 complex, complex III, CIII), resulting in different assemblies (supercomplex SCI(1)III(2)IV(1) and megacomplex MCI(2)III(2)IV(2)). In terms of tissue distribution, liver specific isoform.

Its subcellular location is the mitochondrion inner membrane. Its pathway is energy metabolism; oxidative phosphorylation. In terms of biological role, component of the cytochrome c oxidase, the last enzyme in the mitochondrial electron transport chain which drives oxidative phosphorylation. The respiratory chain contains 3 multisubunit complexes succinate dehydrogenase (complex II, CII), ubiquinol-cytochrome c oxidoreductase (cytochrome b-c1 complex, complex III, CIII) and cytochrome c oxidase (complex IV, CIV), that cooperate to transfer electrons derived from NADH and succinate to molecular oxygen, creating an electrochemical gradient over the inner membrane that drives transmembrane transport and the ATP synthase. Cytochrome c oxidase is the component of the respiratory chain that catalyzes the reduction of oxygen to water. Electrons originating from reduced cytochrome c in the intermembrane space (IMS) are transferred via the dinuclear copper A center (CU(A)) of subunit 2 and heme A of subunit 1 to the active site in subunit 1, a binuclear center (BNC) formed by heme A3 and copper B (CU(B)). The BNC reduces molecular oxygen to 2 water molecules unsing 4 electrons from cytochrome c in the IMS and 4 protons from the mitochondrial matrix. The polypeptide is Cytochrome c oxidase subunit 6A1, mitochondrial (COX6A1) (Ovis aries (Sheep)).